The sequence spans 159 residues: Transcription elongation factor GreA (159 aa).

Belongs to the GreA/GreB family.

Necessary for efficient RNA polymerase transcription elongation past template-encoded arresting sites. The arresting sites in DNA have the property of trapping a certain fraction of elongating RNA polymerases that pass through, resulting in locked ternary complexes. Cleavage of the nascent transcript by cleavage factors such as GreA or GreB allows the resumption of elongation from the new 3'terminus. GreA releases sequences of 2 to 3 nucleotides. In Psychromonas ingrahamii (strain DSM 17664 / CCUG 51855 / 37), this protein is Transcription elongation factor GreA.